The chain runs to 375 residues: UDP-N-acetylglucosamine--N-acetylmuramyl-(pentapeptide) pyrophosphoryl-undecaprenol N-acetylglucosamine transferase (375 aa).

Residues 13–15, Asn124, Arg165, Ser193, and Gln294 each bind UDP-N-acetyl-alpha-D-glucosamine; that span reads TGG.

Belongs to the glycosyltransferase 28 family. MurG subfamily.

The protein localises to the cell inner membrane. It catalyses the reaction di-trans,octa-cis-undecaprenyl diphospho-N-acetyl-alpha-D-muramoyl-L-alanyl-D-glutamyl-meso-2,6-diaminopimeloyl-D-alanyl-D-alanine + UDP-N-acetyl-alpha-D-glucosamine = di-trans,octa-cis-undecaprenyl diphospho-[N-acetyl-alpha-D-glucosaminyl-(1-&gt;4)]-N-acetyl-alpha-D-muramoyl-L-alanyl-D-glutamyl-meso-2,6-diaminopimeloyl-D-alanyl-D-alanine + UDP + H(+). It participates in cell wall biogenesis; peptidoglycan biosynthesis. Functionally, cell wall formation. Catalyzes the transfer of a GlcNAc subunit on undecaprenyl-pyrophosphoryl-MurNAc-pentapeptide (lipid intermediate I) to form undecaprenyl-pyrophosphoryl-MurNAc-(pentapeptide)GlcNAc (lipid intermediate II). In Brucella anthropi (strain ATCC 49188 / DSM 6882 / CCUG 24695 / JCM 21032 / LMG 3331 / NBRC 15819 / NCTC 12168 / Alc 37) (Ochrobactrum anthropi), this protein is UDP-N-acetylglucosamine--N-acetylmuramyl-(pentapeptide) pyrophosphoryl-undecaprenol N-acetylglucosamine transferase.